A 57-amino-acid polypeptide reads, in one-letter code: uncharacterized protein (57 aa).

The helical transmembrane segment at 24–44 threads the bilayer; sequence LWVTLLLTMFFTAVEIIGGLI.

To cation A.eutrophus efflux system protein CzcD.

The protein localises to the cell membrane. This is an uncharacterized protein from Bacillus caldolyticus.